Reading from the N-terminus, the 175-residue chain is Peptide methionine sulfoxide reductase MsrA (175 aa).

C10 is an active-site residue.

Belongs to the MsrA Met sulfoxide reductase family.

It catalyses the reaction L-methionyl-[protein] + [thioredoxin]-disulfide + H2O = L-methionyl-(S)-S-oxide-[protein] + [thioredoxin]-dithiol. The catalysed reaction is [thioredoxin]-disulfide + L-methionine + H2O = L-methionine (S)-S-oxide + [thioredoxin]-dithiol. Its function is as follows. Has an important function as a repair enzyme for proteins that have been inactivated by oxidation. Catalyzes the reversible oxidation-reduction of methionine sulfoxide in proteins to methionine. The chain is Peptide methionine sulfoxide reductase MsrA from Clavibacter michiganensis subsp. michiganensis (strain NCPPB 382).